The sequence spans 30 residues: Cyclotide hyen-C (30 aa).

A cross-link (cyclopeptide (Gly-Asn)) is located at residues 1-30 (GTHPCQETCVTSTRCSTQGCHCNWPICFKN). Cystine bridges form between cysteine 5/cysteine 20, cysteine 9/cysteine 22, and cysteine 15/cysteine 27.

Post-translationally, this is a cyclic peptide. Detected in stems (at protein level).

Its function is as follows. Probably participates in a plant defense mechanism. Does not display any cytotoxic activity towards K562, HeLa, MCF-7, HUVEC or red blood cells. Does not bind to phospholipd membranes containing 1-palmitoyl 2-oleoyl phosphatidylcholine (POPC) or 1-palmitoyl-2-oleophosphatidylethanolamine (POPE). This chain is Cyclotide hyen-C, found in Pigea enneasperma (Spade flower).